A 426-amino-acid chain; its full sequence is Histidine--tRNA ligase (426 aa).

It belongs to the class-II aminoacyl-tRNA synthetase family. Homodimer.

It localises to the cytoplasm. It catalyses the reaction tRNA(His) + L-histidine + ATP = L-histidyl-tRNA(His) + AMP + diphosphate + H(+). The chain is Histidine--tRNA ligase from Legionella pneumophila (strain Paris).